The following is a 245-amino-acid chain: NLP effector protein Pc118551 (245 aa).

The N-terminal stretch at 1–19 (MNLRAFLLSAVAALVAVQA) is a signal peptide. Residues 121-127 (QRRHLWE) carry the Hepta-peptide GHRHDWE motif motif. Residue N140 is glycosylated (N-linked (GlcNAc...) asparagine).

The protein belongs to the Necrosis inducing protein (NPP1) family.

Its subcellular location is the secreted. Its function is as follows. Secreted effector that contributes strongly to virulence during infection by P.capsici. This chain is NLP effector protein Pc118551, found in Phytophthora capsici.